We begin with the raw amino-acid sequence, 268 residues long: Norsolorinic acid ketoreductase nor1 (268 aa).

NADP(+)-binding residues include isoleucine 32, aspartate 79, asparagine 108, tyrosine 182, lysine 186, valine 213, and threonine 215. The active-site Proton donor is tyrosine 182. The active-site Lowers pKa of active site Tyr is the lysine 186.

It belongs to the short-chain dehydrogenases/reductases (SDR) family.

It localises to the cytoplasm. The protein resides in the cytosol. It is found in the vacuole. It catalyses the reaction (1'S)-averantin + NADP(+) = norsolorinic acid + NADPH + H(+). Its pathway is mycotoxin biosynthesis. Functionally, norsolorinic acid ketoreductase; part of the fragmented gene cluster that mediates the biosynthesis of dothistromin (DOTH), a polyketide toxin very similar in structure to the aflatoxin precursor, versicolorin B. The first step of the pathway is the conversion of acetate to norsolorinic acid (NOR) and requires the fatty acid synthase subunits hexA and hexB, as well as the polyketide synthase pksA. PksA combines a hexanoyl starter unit and 7 malonyl-CoA extender units to synthesize the precursor NOR. The hexanoyl starter unit is provided to the acyl-carrier protein (ACP) domain by the fungal fatty acid synthase hexA/hexB. The second step is the conversion of NOR to averantin (AVN) and requires the norsolorinic acid ketoreductase nor1, which catalyzes the dehydration of norsolorinic acid to form (1'S)-averantin. The cytochrome P450 monooxygenase avnA then catalyzes the hydroxylation of AVN to 5'hydroxyaverantin (HAVN). The next step is performed by adhA that transforms HAVN to averufin (AVF). Averufin might then be converted to hydroxyversicolorone by cypX and avfA. Hydroxyversicolorone is further converted versiconal hemiacetal acetate (VHA) by moxY. VHA is then the substrate for the versiconal hemiacetal acetate esterase est1 to yield versiconal (VAL). Versicolorin B synthase vbsA then converts VAL to versicolorin B (VERB) by closing the bisfuran ring. Then, the activity of the versicolorin B desaturase verB leads to versicolorin A (VERA). DotB, a predicted chloroperoxidase, may perform epoxidation of the A-ring of VERA. Alternatively, a cytochrome P450, such as cypX or avnA could catalyze this step. It is also possible that another, uncharacterized, cytochrome P450 enzyme is responsible for this step. Opening of the epoxide could potentially be achieved by the epoxide hydrolase epoA. However, epoA seems not to be required for DOTH biosynthesis, but other epoxide hydrolases may have the ability to complement this hydrolysis. Alternatively, opening of the epoxide ring could be achieved non-enzymatically. The next step is the deoxygenation of ring A to yield the 5,8-dihydroxyanthraquinone which is most likely catalyzed by the NADPH dehydrogenase encoded by ver1. The last stages of DOTH biosynthesis are proposed to involve hydroxylation of the bisfuran. OrdB and norB might have oxidative roles here. An alternative possibility is that cytochrome P450 monoogenases such as avnA and cypX might perform these steps in addition to previously proposed steps. This chain is Norsolorinic acid ketoreductase nor1, found in Dothistroma septosporum (strain NZE10 / CBS 128990) (Red band needle blight fungus).